Consider the following 282-residue polypeptide: Protein N-terminal and lysine N-methyltransferase efm7 (282 aa).

The span at Met1 to Glu13 shows a compositional bias: basic and acidic residues. The tract at residues Met1–Tyr32 is disordered. S-adenosyl-L-methionine is bound by residues Trp67, Gly93–Ala95, Asp115, Trp152, and Ala179.

The protein belongs to the class I-like SAM-binding methyltransferase superfamily. EFM7 family.

Its subcellular location is the cytoplasm. In terms of biological role, S-adenosyl-L-methionine-dependent protein methyltransferase that trimethylates the N-terminal glycine 'Gly-2' of elongation factor 1-alpha, before also catalyzing the mono- and dimethylation of 'Lys-3'. The polypeptide is Protein N-terminal and lysine N-methyltransferase efm7 (nnt-1) (Neurospora crassa (strain ATCC 24698 / 74-OR23-1A / CBS 708.71 / DSM 1257 / FGSC 987)).